We begin with the raw amino-acid sequence, 60 residues long: Large ribosomal subunit protein bL32 (60 aa).

The protein belongs to the bacterial ribosomal protein bL32 family.

This is Large ribosomal subunit protein bL32 from Streptococcus pneumoniae serotype 4 (strain ATCC BAA-334 / TIGR4).